The chain runs to 217 residues: Peptide methionine sulfoxide reductase MsrA 1 (217 aa).

Cysteine 57 is a catalytic residue.

This sequence belongs to the MsrA Met sulfoxide reductase family.

The enzyme catalyses L-methionyl-[protein] + [thioredoxin]-disulfide + H2O = L-methionyl-(S)-S-oxide-[protein] + [thioredoxin]-dithiol. It catalyses the reaction [thioredoxin]-disulfide + L-methionine + H2O = L-methionine (S)-S-oxide + [thioredoxin]-dithiol. In terms of biological role, has an important function as a repair enzyme for proteins that have been inactivated by oxidation. Catalyzes the reversible oxidation-reduction of methionine sulfoxide in proteins to methionine. This Rhizobium meliloti (strain 1021) (Ensifer meliloti) protein is Peptide methionine sulfoxide reductase MsrA 1 (msrA1).